A 278-amino-acid polypeptide reads, in one-letter code: Protein Rv2133c (278 aa).

The protein is Protein Rv2133c of Mycobacterium tuberculosis (strain ATCC 25618 / H37Rv).